The following is a 336-amino-acid chain: Phytochrome A-associated F-box protein (336 aa).

One can recognise an F-box domain in the interval Glu-3 to Ile-55. Positions Arg-197 to Lys-201 match the Nuclear localization signal motif.

As to quaternary structure, probable component of an E3 ubiquitin ligase SCF complex. Interacts with SKP1A/ASK1 and SKP1B/ASK2.

The protein resides in the nucleus. It functions in the pathway protein modification; protein ubiquitination. Its function is as follows. Component of SCF(ASK-cullin-F-box) E3 ubiquitin ligase complexes, which may mediate the ubiquitination and subsequent proteasomal degradation of target proteins. Negative regulator of the phyA signaling pathway that shifts the responsiveness of the phyA signaling system associated with hypocotyl elongation from red to far-red wavelength. In Arabidopsis thaliana (Mouse-ear cress), this protein is Phytochrome A-associated F-box protein (EID1).